The primary structure comprises 190 residues: Segregation and condensation protein B (190 aa).

The protein belongs to the ScpB family. In terms of assembly, homodimer. Homodimerization may be required to stabilize the binding of ScpA to the Smc head domains. Component of a cohesin-like complex composed of ScpA, ScpB and the Smc homodimer, in which ScpA and ScpB bind to the head domain of Smc. The presence of the three proteins is required for the association of the complex with DNA.

The protein localises to the cytoplasm. Its function is as follows. Participates in chromosomal partition during cell division. May act via the formation of a condensin-like complex containing Smc and ScpA that pull DNA away from mid-cell into both cell halves. The sequence is that of Segregation and condensation protein B from Ruminiclostridium cellulolyticum (strain ATCC 35319 / DSM 5812 / JCM 6584 / H10) (Clostridium cellulolyticum).